The following is a 386-amino-acid chain: Cytochrome b (386 aa).

4 helical membrane passes run 32–52, 76–98, 113–133, and 179–199; these read TGSL…FTAM, YLIR…GHIG, VWVI…TGYC, and FFAL…MHLM. Heme b contacts are provided by His-82 and His-96. Residues His-183 and His-197 each contribute to the heme b site. His-202 provides a ligand contact to a ubiquinone. Transmembrane regions (helical) follow at residues 225-245, 289-309, 321-341, and 348-368; these read FVFK…TFVF, LGGV…PVTD, FSKT…QLGQ, and FIEM…VLVP.

It belongs to the cytochrome b family. In terms of assembly, fungal cytochrome b-c1 complex contains 10 subunits; 3 respiratory subunits, 2 core proteins and 5 low-molecular weight proteins. Cytochrome b-c1 complex is a homodimer. Requires heme b as cofactor.

It is found in the mitochondrion inner membrane. Its function is as follows. Component of the ubiquinol-cytochrome c reductase complex (complex III or cytochrome b-c1 complex) that is part of the mitochondrial respiratory chain. The b-c1 complex mediates electron transfer from ubiquinol to cytochrome c. Contributes to the generation of a proton gradient across the mitochondrial membrane that is then used for ATP synthesis. In Wickerhamomyces pijperi (Yeast), this protein is Cytochrome b (COB).